The following is a 162-amino-acid chain: Functional amyloid chaperone FapA (162 aa).

A signal peptide spans 1-28 (MSGSSLRIVVPALLVIVGSVPVSLPAHA).

The protein belongs to the FapA family. In terms of assembly, monomer in solution. Interacts with FapC but not FapB in vitro.

It localises to the periplasm. An intrinsically disordered chaperone for fibril amyloid FapC that guards against fibrillation within the periplasm. Upon overexpression of the endogenous six-gene locus (fapA-fapF), cells form large clumps during liquid growth, make large amounts of biofilm and produce amyloid fibrils. The protein is Functional amyloid chaperone FapA of Pseudomonas aeruginosa (strain ATCC 15692 / DSM 22644 / CIP 104116 / JCM 14847 / LMG 12228 / 1C / PRS 101 / PAO1).